Here is a 208-residue protein sequence, read N- to C-terminus: Large ribosomal subunit protein uL3 (208 aa).

The segment at 116–148 (GFQGVIKRHGQSRGPMAHGSRYHRRPGSMGPVA) is disordered.

The protein belongs to the universal ribosomal protein uL3 family. As to quaternary structure, part of the 50S ribosomal subunit. Forms a cluster with proteins L14 and L19.

One of the primary rRNA binding proteins, it binds directly near the 3'-end of the 23S rRNA, where it nucleates assembly of the 50S subunit. In Streptococcus pyogenes serotype M5 (strain Manfredo), this protein is Large ribosomal subunit protein uL3.